The sequence spans 1672 residues: Probable outer membrane protein PmpB (1672 aa).

An N-terminal signal peptide occupies residues 1 to 14 (MSSMKWLSATAVFA). Disordered regions lie at residues 69–122 (IPVK…GGAF), 203–263 (NTAE…GSGG), 384–415 (EAQTNKSSVTAASQSGPNTTPTPTPPVTAKGG), and 734–765 (STGVATTATTSQSPTVSSFLPRATAGSSPAPA). Low complexity-rich tracts occupy residues 77–88 (DDSSTSTPTTSS), 100–111 (SSSSSPNSGDTS), and 203–234 (NTAEVVPEETTPNPNPGTQTTTSQPSPTSKVQ). Polar residues-rich tracts occupy residues 235-256 (SLFTYSSSTQANGNGADSQTPS) and 384-399 (EAQTNKSSVTAASQSG). Low complexity predominate over residues 734–744 (STGVATTATTS). Positions 1379–1672 (DDAAYNNFWV…MTSCGARMIF (294 aa)) constitute an Autotransporter domain.

This sequence belongs to the PMP outer membrane protein family.

It is found in the secreted. It localises to the cell wall. The protein resides in the cell outer membrane. This chain is Probable outer membrane protein PmpB (pmpB), found in Chlamydia muridarum (strain MoPn / Nigg).